The following is a 110-amino-acid chain: Large ribosomal subunit protein uL22 (110 aa).

The protein belongs to the universal ribosomal protein uL22 family. As to quaternary structure, part of the 50S ribosomal subunit.

This protein binds specifically to 23S rRNA; its binding is stimulated by other ribosomal proteins, e.g. L4, L17, and L20. It is important during the early stages of 50S assembly. It makes multiple contacts with different domains of the 23S rRNA in the assembled 50S subunit and ribosome. In terms of biological role, the globular domain of the protein is located near the polypeptide exit tunnel on the outside of the subunit, while an extended beta-hairpin is found that lines the wall of the exit tunnel in the center of the 70S ribosome. The protein is Large ribosomal subunit protein uL22 of Buchnera aphidicola subsp. Schizaphis graminum (strain Sg).